The primary structure comprises 139 residues: Probable transcription termination protein NusA (139 aa).

A KH domain is found at 31–97 (DDRVVYVVTA…YNVTVSENDT (67 aa)).

The protein belongs to the NusA family.

It is found in the cytoplasm. Participates in transcription termination. This is Probable transcription termination protein NusA from Halobacterium salinarum (strain ATCC 29341 / DSM 671 / R1).